Consider the following 359-residue polypeptide: 4-galactosyl-N-acetylglucosaminide 3-alpha-L-fucosyltransferase 9 (359 aa).

Residues 1-11 (MTSTSKGILRP) are Cytoplasmic-facing. A helical; Signal-anchor for type II membrane protein transmembrane segment spans residues 12–32 (FLIVCVILACFMACLLIYIKP). Over 33–359 (TNSWVFSPME…VGNLEKWFWN (327 aa)) the chain is Lumenal. N-linked (GlcNAc...) asparagine glycosylation occurs at Asn62. Residues 63-168 (ETTILVWVWP…RRDSDIQVPY (106 aa)) are acceptor-binding. An a beta-D-galactosyl-(1-&gt;4)-N-acetyl-beta-D-glucosaminyl derivative-binding site is contributed by Gln75. 3 disulfide bridges follow: Cys82/Cys335, Cys91/Cys338, and Cys190/Cys238. Asn101 is a glycosylation site (N-linked (GlcNAc...) asparagine). Position 137 (Glu137) interacts with a beta-D-galactosyl-(1-&gt;4)-N-acetyl-beta-D-glucosaminyl derivative. The active-site Nucleophile is Glu137. Residue Glu137 participates in GDP-beta-L-fucose binding. N-linked (GlcNAc...) asparagine glycosylation occurs at Asn153. Tyr168, Val192, Ser194, Asn195, Arg202, Val226, Tyr241, Asn246, Tyr252, Glu255, and Lys256 together coordinate GDP-beta-L-fucose. A donor-binding region spans residues 169 to 326 (GFLTVSTNPF…NWRKDFTVNL (158 aa)). An acceptor-binding region spans residues 327–359 (PRFWESHACLACDHVKRHQEYKSVGNLEKWFWN).

This sequence belongs to the glycosyltransferase 10 family. As to quaternary structure, homodimer. In terms of processing, N-glycosylated with complex-type N-glycans.

The protein localises to the golgi apparatus. The protein resides in the trans-Golgi network membrane. It is found in the golgi apparatus membrane. It carries out the reaction a beta-D-galactosyl-(1-&gt;4)-N-acetyl-beta-D-glucosaminyl derivative + GDP-beta-L-fucose = a beta-D-galactosyl-(1-&gt;4)-[alpha-L-fucosyl-(1-&gt;3)]-N-acetyl-beta-D-glucosaminyl derivative + GDP + H(+). The enzyme catalyses an alpha-Neu5Ac-(2-&gt;3)-beta-D-Gal-(1-&gt;4)-beta-D-GlcNAc-(1-&gt;3)-beta-D-Gal-(1-&gt;4)-beta-D-GlcNAc derivative + GDP-beta-L-fucose = an alpha-Neu5Ac-(2-&gt;3)-beta-D-Gal-(1-&gt;4)-beta-D-GlcNAc-(1-&gt;3)-beta-D-Gal-(1-&gt;4)-[alpha-L-Fuc-(1-&gt;3)]-beta-D-GlcNAc derivative + GDP + H(+). It catalyses the reaction alpha-N-glycoloylneuraminosyl-(2-&gt;3)-beta-D-galactosyl-(1-&gt;4)-N-acetyl-beta-D-glucosaminyl-(1-&gt;3)-beta-D-galactosyl-(1-&gt;4)-N-acetyl-beta-D-glucosaminyl-(1-&gt;3)-beta-D-galactosyl-(1-&gt;4)-beta-D-glucosyl-(1&lt;-&gt;1')-ceramide + GDP-beta-L-fucose = alpha-N-glycoloylneuraminosyl-(2-&gt;3)-beta-D-galactosyl-(1-&gt;4)-N-acetyl-beta-D-glucosaminyl-(1-&gt;3)-beta-D-galactosyl-(1-&gt;4)-[alpha-L-fucosyl-(1-&gt;3)]-N-acetyl-beta-D-glucosaminyl-(1-&gt;3)-beta-D-galactosyl-(1-&gt;4)-beta-D-glucosyl-(1&lt;-&gt;1')-ceramide + GDP + H(+). The catalysed reaction is alpha-D-galactosyl-(1-&gt;3)-beta-D-galactosyl-(1-&gt;4)-N-acetyl-beta-D-glucosaminyl-(1-&gt;3)-beta-D-galactosyl-(1-&gt;4)-beta-D-glucosyl-(1&lt;-&gt;1')-ceramide + GDP-beta-L-fucose = a neolactoside IV(3)-alpha-Gal,III(3)-alpha-Fuc-nLc4Cer + GDP + H(+). It carries out the reaction a neolactoside nLc4Cer + GDP-beta-L-fucose = a neolactoside III(3)-alpha-Fuc-nLc4Cer + GDP + H(+). The enzyme catalyses an N-acetyl-alpha-neuraminyl-(2-&gt;3)-beta-D-galactosyl-(1-&gt;4)-N-acetyl-beta-D-glucosaminyl derivative + GDP-beta-L-fucose = an alpha-Neu5Ac-(2-&gt;3)-beta-D-Gal-(1-&gt;4)-[alpha-L-Fuc-(1-&gt;3)]-beta-D-GlcNAc derivative + GDP + H(+). It catalyses the reaction beta-D-Gal-(1-&gt;4)-beta-D-GlcNAc-(1-&gt;3)-beta-D-Gal-(1-&gt;4)-D-Glc + GDP-beta-L-fucose = beta-D-Gal-(1-&gt;4)-[alpha-L-Fuc-(1-&gt;3)]-beta-D-GlcNAc-(1-&gt;3)-beta-D-Gal-(1-&gt;4)-D-Glc + GDP + H(+). The catalysed reaction is an alpha-L-Fuc-(1-&gt;2)-beta-D-Gal-(1-&gt;4)-beta-D-GlcNAc derivative + GDP-beta-L-fucose = an alpha-L-Fuc-(1-&gt;2)-beta-D-Gal-(1-&gt;4)-[alpha-L-Fuc-(1-&gt;3)]-beta-D-GlcNAc derivative + GDP + H(+). It functions in the pathway protein modification; protein glycosylation. It participates in glycolipid biosynthesis. Its activity is regulated as follows. Activated by Mn2+. Its function is as follows. Catalyzes alpha(1-&gt;3) linkage of fucosyl moiety transferred from GDP-beta-L-fucose to N-acetyl glucosamine (GlcNAc) within type 2 lactosamine (LacNAc, beta-D-Gal-(1-&gt;4)-beta-D-GlcNAc-) glycan attached to glycolipids and N- or O-linked glycoproteins. Fucosylates distal type 2 LacNAc and its fucosylated (H-type 2 LacNAc) and sialylated (sialyl-type 2 LacNAc) derivatives to form Lewis x (Lex) (CD15) and Lewis y (Ley) antigenic epitopes involved in cell adhesion and differentiation. Generates Lex epitopes in the brain, presumably playing a role in the maintenance of neuronal stemness and neurite outgrowth in progenitor neural cells. Fucosylates the internal type 2 LacNAc unit of the polylactosamine chain to form VIM-2 antigen that serves as recognition epitope for SELE. Can also modify milk oligosaccharides in particular type 2 tetrasaccharide LNnT. The sequence is that of 4-galactosyl-N-acetylglucosaminide 3-alpha-L-fucosyltransferase 9 from Cricetulus griseus (Chinese hamster).